The primary structure comprises 488 residues: Pre-glycoprotein polyprotein GP complex (488 aa).

The N-myristoyl glycine; by host moiety is linked to residue glycine 2. Residues 2-17 are Extracellular-facing; the sequence is GQLFSFFEEVPNIIHE. Residues 18-32 form a helical membrane-spanning segment; sequence AINIALIAVSLIAAL. Lysine 33 is a topological domain (cytoplasmic). A helical membrane pass occupies residues 34–53; the sequence is GMINLWKSGLFQLIFFLTLA. 2 consecutive stretches face the extracellular side: residues 54–58 and 59–427; these read GRSCS and FRIG…TLVD. Cysteine 57 provides a ligand contact to Zn(2+). N-linked (GlcNAc...) asparagine; by host glycans are attached at residues asparagine 69, asparagine 88, asparagine 99, asparagine 125, asparagine 171, asparagine 178, and asparagine 222. 4 disulfides stabilise this stretch: cysteine 85-cysteine 229, cysteine 274-cysteine 287, cysteine 296-cysteine 305, and cysteine 359-cysteine 380. Asparagine 360, asparagine 368, asparagine 385, and asparagine 390 each carry an N-linked (GlcNAc...) asparagine; by host glycan. The chain crosses the membrane as a helical span at residues 428–448; the sequence is ICFWSTLFFTTTLFLHLVGFP. The Cytoplasmic portion of the chain corresponds to 449-488; it reads THRHIRGEPCPLPHRLNSRGGCRCGKYPELKKPITWHKNH. Residues histidine 450, histidine 452, cysteine 458, histidine 462, cysteine 470, cysteine 472, and histidine 488 each contribute to the Zn(2+) site.

The protein belongs to the arenaviridae GPC protein family. Homotetramer; disulfide-linked. As to quaternary structure, homotetramer. GP2 homotetramers bind through ionic interactions with GP1 homotetramers to form the GP complex together with the stable signal peptide. The GP-C polyprotein interacts with the host protease MBTPS1/SKI-1 resulting in the polyprotein processing. Specific enzymatic cleavages in vivo yield mature proteins. GP-C polyprotein is cleaved in the endoplasmic reticulum by the host protease MBTPS1. Only cleaved glycoprotein is incorporated into virions. In terms of processing, the SSP remains stably associated with the GP complex following cleavage by signal peptidase and plays crucial roles in the trafficking of GP through the secretory pathway. Post-translationally, myristoylation is necessary for GP2-mediated fusion activity.

It localises to the virion membrane. Its subcellular location is the host endoplasmic reticulum membrane. The protein resides in the host Golgi apparatus membrane. The protein localises to the host cell membrane. Functionally, interacts with the host receptor. Mediates virus attachment to host TFRC. This attachment induces virion internalization predominantly through clathrin-mediated endocytosis. In terms of biological role, class I viral fusion protein that directs fusion of viral and host endosomal membranes, leading to delivery of the nucleocapsid into the cytoplasm. Membrane fusion is mediated by irreversible conformational changes induced upon acidification in the endosome. Stable signal peptide (SSP): cleaved and functions as a signal peptide. In addition, it is also retained as the third component of the GP complex. The SSP is required for efficient glycoprotein expression, post-translational maturation cleavage of GP1 and GP2, glycoprotein transport to the cell surface plasma membrane, formation of infectious virus particles, and acid pH-dependent glycoprotein-mediated cell fusion. This is Pre-glycoprotein polyprotein GP complex from Homo sapiens (Human).